The chain runs to 1165 residues: Linoleate diol synthase (1165 aa).

Residues 104 to 448 form a fatty acid alpha-dioxygenase region; the sequence is TDGLINDLWD…DGAFDDTELV (345 aa). Residue His-203 coordinates heme b. Residues Asp-204, Ser-219, Tyr-221, Asp-223, and Ser-225 each coordinate Ca(2+). The active site involves Tyr-376. His-379 is a heme b binding site. The interval 666 to 1161 is epoxy alcohol synthase; it reads EVLSNQKDYK…ATTMKINWEG (496 aa). Cys-1080 provides a ligand contact to heme. Residues 1114–1134 form a disordered region; that stretch reads RSYPASQWPGQAGRPPRDPAW.

This sequence belongs to the peroxidase family. In terms of assembly, homotetramer. The cofactor is heme b. Ca(2+) is required as a cofactor. Heme serves as cofactor. In terms of processing, the N-terminus is blocked.

It catalyses the reaction (9Z,12Z)-octadecadienoate + O2 = (8R,9Z,12Z)-8-hydroperoxyoctadeca-9,12-dienoate. It carries out the reaction (8R,9Z,12Z)-8-hydroperoxyoctadeca-9,12-dienoate = (7S,8S,9Z,12Z)-7,8-dihydroxyoctadeca-9,12-dienoate. In terms of biological role, 7,8-linoleate diol synthase is a bifunctional enzyme that converts linoleic acid (18:2n-6) into 8-hydroperoxy-8(E),12(Z)-octadecadienoic acid (8-HPODE) and then catalyzes the isomerization of the resulting hydroperoxide to 7,8-dihydroxy-9(Z),12(Z)-octadecadienoic acid (7,8-DiHODE). In Gaeumannomyces graminis (Turf grass take-all root rot fungus), this protein is Linoleate diol synthase.